A 434-amino-acid polypeptide reads, in one-letter code: Serine/threonine-protein kinase Sgk1-A (434 aa).

A disordered region spans residues 66 to 94 (PQEPELLNENSSPPPSPSQQINLGPSSNP). A compositionally biased stretch (polar residues) spans 84 to 94 (QQINLGPSSNP). Residues 101–358 (FQFLKIIGKG…FMEIKNHIFF (258 aa)) enclose the Protein kinase domain. ATP contacts are provided by residues 107–115 (IGKGSFGKV) and K130. D225 serves as the catalytic Proton acceptor. The AGC-kinase C-terminal domain occupies 359–434 (SPINWDDLIN…SYAPPMESYL (76 aa)).

It belongs to the protein kinase superfamily. AGC Ser/Thr protein kinase family.

The protein localises to the cytoplasm. It localises to the nucleus. Its subcellular location is the endoplasmic reticulum. It carries out the reaction L-seryl-[protein] + ATP = O-phospho-L-seryl-[protein] + ADP + H(+). It catalyses the reaction L-threonyl-[protein] + ATP = O-phospho-L-threonyl-[protein] + ADP + H(+). Its function is as follows. Protein kinase that may play an important role in cellular stress response. Plays an important role in activating certain potassium, sodium, and chloride channels, suggesting an involvement in the regulation of processes such as cell survival, neuronal excitability, and renal sodium excretion. This is Serine/threonine-protein kinase Sgk1-A (sgk1-a) from Xenopus laevis (African clawed frog).